A 226-amino-acid chain; its full sequence is Cytidylate kinase (226 aa).

12–20 (GPSGAGKGT) provides a ligand contact to ATP.

Belongs to the cytidylate kinase family. Type 1 subfamily.

The protein resides in the cytoplasm. The catalysed reaction is CMP + ATP = CDP + ADP. It catalyses the reaction dCMP + ATP = dCDP + ADP. The sequence is that of Cytidylate kinase from Vibrio parahaemolyticus serotype O3:K6 (strain RIMD 2210633).